We begin with the raw amino-acid sequence, 336 residues long: Phosphate acyltransferase (336 aa).

The protein belongs to the PlsX family. Homodimer. Probably interacts with PlsY.

The protein localises to the cytoplasm. It carries out the reaction a fatty acyl-[ACP] + phosphate = an acyl phosphate + holo-[ACP]. It participates in lipid metabolism; phospholipid metabolism. In terms of biological role, catalyzes the reversible formation of acyl-phosphate (acyl-PO(4)) from acyl-[acyl-carrier-protein] (acyl-ACP). This enzyme utilizes acyl-ACP as fatty acyl donor, but not acyl-CoA. The sequence is that of Phosphate acyltransferase from Dictyoglomus turgidum (strain DSM 6724 / Z-1310).